We begin with the raw amino-acid sequence, 649 residues long: Archaeal Lon protease (649 aa).

Topologically, residues 1–114 (MFSIKFKTTE…KLDFKAPSST (114 aa)) are cytoplasmic. 47–54 (GDPGVGKS) serves as a coordination point for ATP. A helical membrane pass occupies residues 115–135 (TLLLIMIGAILLSEYLLKYLP). Topologically, residues 136–138 (QNY) are extracellular. A helical transmembrane segment spans residues 139-159 (LLAAVTITALIVLIFGFVIIL). Residues 160–649 (TSIMGASRAS…DNRGGAERFN (490 aa)) are Cytoplasmic-facing. Residues 456-639 (EPKVGVIYGL…DEIVPLVFDL (184 aa)) form the Lon proteolytic domain. Residues Ser550 and Lys593 contribute to the active site.

Belongs to the peptidase S16 family. Archaeal LonB subfamily. Homohexamer. Organized in a ring with a central cavity.

The protein resides in the cell membrane. In terms of biological role, ATP-dependent serine protease that mediates the selective degradation of mutant and abnormal proteins as well as certain short-lived regulatory proteins. Degrades polypeptides processively. The chain is Archaeal Lon protease from Methanocaldococcus jannaschii (strain ATCC 43067 / DSM 2661 / JAL-1 / JCM 10045 / NBRC 100440) (Methanococcus jannaschii).